The sequence spans 346 residues: Quinolinate synthase (346 aa).

The iminosuccinate site is built by histidine 47 and serine 68. Cysteine 113 is a [4Fe-4S] cluster binding site. Residues 139–141 and serine 156 contribute to the iminosuccinate site; that span reads YAN. Cysteine 200 serves as a coordination point for [4Fe-4S] cluster. Iminosuccinate is bound by residues 226–228 and threonine 243; that span reads HPE. Cysteine 297 contacts [4Fe-4S] cluster.

Belongs to the quinolinate synthase family. Type 1 subfamily. The cofactor is [4Fe-4S] cluster.

It is found in the cytoplasm. The enzyme catalyses iminosuccinate + dihydroxyacetone phosphate = quinolinate + phosphate + 2 H2O + H(+). It participates in cofactor biosynthesis; NAD(+) biosynthesis; quinolinate from iminoaspartate: step 1/1. Its function is as follows. Catalyzes the condensation of iminoaspartate with dihydroxyacetone phosphate to form quinolinate. The protein is Quinolinate synthase of Pseudoalteromonas translucida (strain TAC 125).